Reading from the N-terminus, the 268-residue chain is Undecaprenyl-diphosphatase (268 aa).

Helical transmembrane passes span 4–24, 50–70, 84–104, 109–129, 144–164, 184–204, 214–234, and 245–265; these read STTLVALVLGLLEGLTEFIPV, IQLGAVLAVLTVYASKLISVI, AAVLLAFLPAVVVGVMAHGFI, FETPILIAIMLILGGIILLFV, VPLGVALKIGFFQCLAMVPGV, AAEFSFFLSMPTMAGAFAFDL, GALGEIAVGFVAAFLAAVLVV, and GYSLFGWWRIIVGSIALAALL.

It belongs to the UppP family.

The protein localises to the cell inner membrane. The catalysed reaction is di-trans,octa-cis-undecaprenyl diphosphate + H2O = di-trans,octa-cis-undecaprenyl phosphate + phosphate + H(+). Catalyzes the dephosphorylation of undecaprenyl diphosphate (UPP). Confers resistance to bacitracin. This chain is Undecaprenyl-diphosphatase, found in Cereibacter sphaeroides (strain ATCC 17025 / ATH 2.4.3) (Rhodobacter sphaeroides).